A 388-amino-acid chain; its full sequence is Chorismate synthase (388 aa).

NADP(+) contacts are provided by arginine 39 and arginine 45. The interval glutamate 95–lysine 118 is disordered. Residues arginine 130–serine 132, asparagine 251–alanine 252, glycine 296, lysine 311–threonine 315, and arginine 337 contribute to the FMN site.

Belongs to the chorismate synthase family. As to quaternary structure, homotetramer. It depends on FMNH2 as a cofactor.

The enzyme catalyses 5-O-(1-carboxyvinyl)-3-phosphoshikimate = chorismate + phosphate. It functions in the pathway metabolic intermediate biosynthesis; chorismate biosynthesis; chorismate from D-erythrose 4-phosphate and phosphoenolpyruvate: step 7/7. In terms of biological role, catalyzes the anti-1,4-elimination of the C-3 phosphate and the C-6 proR hydrogen from 5-enolpyruvylshikimate-3-phosphate (EPSP) to yield chorismate, which is the branch point compound that serves as the starting substrate for the three terminal pathways of aromatic amino acid biosynthesis. This reaction introduces a second double bond into the aromatic ring system. The protein is Chorismate synthase of Listeria monocytogenes serovar 1/2a (strain ATCC BAA-679 / EGD-e).